We begin with the raw amino-acid sequence, 138 residues long: MRHGKVHRKLNRTAEHRRAMFANMAAALIKHEQIVTTLPKAKELRPIVEKLVTLGKKGGLAMRRQAISEMRDKDQVKKLFDVLATRYKDRQGGYTRIIKAGFRYGDNAAMAVIEFVDRDVDAKGQDSGPVQEKEAEAA.

The protein belongs to the bacterial ribosomal protein bL17 family. Part of the 50S ribosomal subunit. Contacts protein L32.

This Bradyrhizobium diazoefficiens (strain JCM 10833 / BCRC 13528 / IAM 13628 / NBRC 14792 / USDA 110) protein is Large ribosomal subunit protein bL17.